A 212-amino-acid chain; its full sequence is Adenylate kinase (212 aa).

10–15 contributes to the ATP binding site; the sequence is GAGKGT. The segment at 30–59 is NMP; the sequence is STGDMFRAAMANQTEMGRLAKSYIDKGELV. AMP is bound by residues Thr31, Arg36, 57-59, 86-89, and Gln93; these read ELV and GYPR. The tract at residues 127-159 is LID; it reads GRIINRKTGETFHKVFNPPVDYKEEDYYQREDD. Residues Arg128 and 137–138 each bind ATP; that span reads TF. Residues Arg156 and Arg167 each contribute to the AMP site. Gln195 contacts ATP.

Belongs to the adenylate kinase family. As to quaternary structure, monomer.

The protein localises to the cytoplasm. It catalyses the reaction AMP + ATP = 2 ADP. Its pathway is purine metabolism; AMP biosynthesis via salvage pathway; AMP from ADP: step 1/1. Functionally, catalyzes the reversible transfer of the terminal phosphate group between ATP and AMP. Plays an important role in cellular energy homeostasis and in adenine nucleotide metabolism. The chain is Adenylate kinase from Streptococcus agalactiae serotype III (strain NEM316).